The sequence spans 1395 residues: DNA-directed RNA polymerase subunit beta' (1395 aa).

Positions 70, 72, 85, and 88 each coordinate Zn(2+). Mg(2+) contacts are provided by D470, D472, and D474. Zn(2+) contacts are provided by C815, C889, C896, and C899.

Belongs to the RNA polymerase beta' chain family. As to quaternary structure, the RNAP catalytic core consists of 2 alpha, 1 beta, 1 beta' and 1 omega subunit. When a sigma factor is associated with the core the holoenzyme is formed, which can initiate transcription. Requires Mg(2+) as cofactor. It depends on Zn(2+) as a cofactor.

It catalyses the reaction RNA(n) + a ribonucleoside 5'-triphosphate = RNA(n+1) + diphosphate. Its function is as follows. DNA-dependent RNA polymerase catalyzes the transcription of DNA into RNA using the four ribonucleoside triphosphates as substrates. This chain is DNA-directed RNA polymerase subunit beta', found in Anaeromyxobacter sp. (strain Fw109-5).